The primary structure comprises 411 residues: Glutamate dehydrogenase 3, mitochondrial (411 aa).

A mitochondrion-targeting transit peptide spans 1–18 (MNALAATSRNFRQAARLL). Lys102 is a catalytic residue.

Belongs to the Glu/Leu/Phe/Val dehydrogenases family. Barely expressed in leaves, spikelets and roots. Glumes and stamens specific accumulation.

The protein localises to the mitochondrion. It catalyses the reaction L-glutamate + NAD(+) + H2O = 2-oxoglutarate + NH4(+) + NADH + H(+). The catalysed reaction is L-glutamate + NADP(+) + H2O = 2-oxoglutarate + NH4(+) + NADPH + H(+). The chain is Glutamate dehydrogenase 3, mitochondrial (GDH3) from Oryza sativa subsp. japonica (Rice).